Here is a 424-residue protein sequence, read N- to C-terminus: Histidine--tRNA ligase (424 aa).

The protein belongs to the class-II aminoacyl-tRNA synthetase family. As to quaternary structure, homodimer.

It is found in the cytoplasm. It catalyses the reaction tRNA(His) + L-histidine + ATP = L-histidyl-tRNA(His) + AMP + diphosphate + H(+). The polypeptide is Histidine--tRNA ligase (hisS) (Bacillus subtilis (strain 168)).